The primary structure comprises 1663 residues: Complement C3 (1663 aa).

Positions 1–24 (MGPASGSQLLVLLLLLASSPLALG) are cleaved as a signal peptide. S40 bears the Phosphoserine mark. 13 cysteine pairs are disulfide-bonded: C559–C816, C626–C661, C693–C720, C694–C727, C707–C728, C873–C1513, C1101–C1158, C1358–C1489, C1389–C1458, C1506–C1511, C1518–C1590, C1537–C1661, and C1637–C1646. S671 bears the Phosphoserine mark. Residues 693-728 (CCEDGMRDIPMRYSCQRRARLITQGENCIKAFIDCC) enclose the Anaphylatoxin-like domain. Residue N939 is glycosylated (N-linked (GlcNAc...) asparagine). S968 carries the post-translational modification Phosphoserine. Positions 1010–1013 (CGEQ) form a cross-link, isoglutamyl cysteine thioester (Cys-Gln). Position 1321 is a phosphoserine (S1321). Residues 1518–1661 (CFMQQSQEKI…FTESMVVYGC (144 aa)) form the NTR domain. A Phosphoserine modification is found at S1573. A glycan (N-linked (GlcNAc...) asparagine) is linked at N1617. An interaction with CFP/properdin region spans residues 1634 to 1659 (AEECQDQKYQKQCEELGAFTESMVVY).

In terms of assembly, in absence of complement activation, the C3 precursor is first processed by the removal of 4 Arg residues, forming two chains, beta and alpha, linked by a disulfide bond. Complement C3b is composed of complement C3b and complement C3 beta chains that are associated via disulfide bonds. Non-enzymatic component of the C5 convertase, also named C4bC2bC3b, composed of the serine protease complement C2b (C2), complement C3b, as well as complement C4b (C4). Non-enzymatic component of the C5 convertase of the alternative complement pathways composed of the serine protease complement CFB and complement C3b. Interacts with CFP; interaction takes place together with CFB in the alternative complement system and allows the complex to become active. Interacts with CR1 (via Sushi 8 and Sushi 9 domains). Interacts with CFH. As to quaternary structure, interacts with CFH. Interacts with CR2. In terms of assembly, during pregnancy, C3dg exists as a complex (probably a 2:2:2 heterohexamer) with AGT and the proform of PRG2. Interacts with CR2 (via the N-terminal Sushi domains 1 and 2). In terms of processing, C3 precursor is first processed by the removal of 4 Arg residues, forming two chains, beta and alpha, linked by a disulfide bond. During activation of the complement systems, the alpha chain is cleaved into C3a and C3b by the C3 convertase: C3b stays linked to the beta chain, while C3a is released in the plasma. The alpha chain is cleaved by the serine protease complement C2b component of the C3 convertase to generate C3a and C3b following activation by the classical, lectin and GZMK complement systems. The alpha chain is cleaved by CFB component of the C3 convertase to generate C3a and C3b following activation by the alternative complement system. C3a is further processed by carboxypeptidases to release the C-terminal arginine residue generating the acylation stimulating protein (ASP). Levels of ASP are increased in adipocytes in the postprandial period and by insulin and dietary chylomicrons. Post-translationally, complement C3b is rapidly split in two positions by factor I (CFI) and a cofactor (CFH) to form iC3b (inactivated C3b) and C3f which is released. CFI and CFH catalyze proteolytic degradation of already-deposited complement C3b. Then iC3b is slowly cleaved (possibly by CFI) to form C3c (beta chain + alpha' chain fragment 1 + alpha' chain fragment 2), C3dg and C3f. Other proteases produce other fragments such as C3d or C3g. In terms of processing, upon activation, the internal thioester bond reacts with carbohydrate antigens on the target surface to form amide or ester bonds, leading to covalent association with the surface of pathogens. Complement C3b interacts with complement C4b via a thioester linkage. Post-translationally, phosphorylated by FAM20C in the extracellular medium.

It is found in the secreted. It localises to the cell surface. Complement activation is inhibited by VSIG4. Its function is as follows. Precursor of non-enzymatic components of the classical, alternative, lectin and GZMK complement pathways, which consist in a cascade of proteins that leads to phagocytosis and breakdown of pathogens and signaling that strengthens the adaptive immune system. In terms of biological role, non-enzymatic component of C5 convertase. Generated following cleavage by C3 convertase, it covalently attaches to the surface of pathogens, where it acts as an opsonin that marks the surface of antigens for removal. Complement C3b binds covalently via its reactive thioester, to cell surface carbohydrates or immune aggregates. Together with complement C4b, it then recruits the serine protease complement C2b to form the C5 convertase, which cleaves and activate C5, the next component of the complement pathways. In the alternative complement pathway, recruits the serine protease CFB to form the C5 convertase that cleaves and activates C5. Mediator of local inflammatory process released following cleavage by C3 convertase. Acts by binding to its receptor, C3AR1, activating G protein-coupled receptor signaling, promoting the phosphorylation, ARRB2-mediated internalization and endocytosis of C3AR1. C3a anaphylatoxin stimulates the activation of immune cells such as mast cells and basophilic leukocytes to release inflammation agents, such as cytokines, chemokines and histamine, which promote inflammation development. Also acts as potent chemoattractant for the migration of macrophages and neutrophils to the inflamed tissues, resulting in neutralization of the inflammatory triggers by multiple ways, such as phagocytosis and generation of reactive oxidants. Functionally, adipogenic hormone that stimulates triglyceride synthesis and glucose transport in adipocytes, regulating fat storage and playing a role in postprandial triglyceride clearance. Appears to stimulate triglyceride synthesis via activation of the PLC, MAPK and AKT signaling pathways. Acts by binding to its receptor, C5AR2, activating G protein-coupled receptor signaling, promoting the phosphorylation, ARRB2-mediated internalization and endocytosis of C5AR2. Its function is as follows. Acts as a chemoattractant for neutrophils in chronic inflammation. This is Complement C3 from Mus musculus (Mouse).